The chain runs to 639 residues: DNA mismatch repair protein MutL (639 aa).

The interval 336 to 392 (SAHDDPTPAISGAARDEEPRGVENRASAGENRFNRPASSPVASAPRPAHVAAPRMPA) is disordered. A compositionally biased stretch (basic and acidic residues) spans 349 to 358 (ARDEEPRGVE). Residues 370–392 (RPASSPVASAPRPAHVAAPRMPA) are compositionally biased toward low complexity.

The protein belongs to the DNA mismatch repair MutL/HexB family.

Its function is as follows. This protein is involved in the repair of mismatches in DNA. It is required for dam-dependent methyl-directed DNA mismatch repair. May act as a 'molecular matchmaker', a protein that promotes the formation of a stable complex between two or more DNA-binding proteins in an ATP-dependent manner without itself being part of a final effector complex. The chain is DNA mismatch repair protein MutL from Edwardsiella ictaluri (strain 93-146).